The chain runs to 331 residues: Glutaminase (331 aa).

Substrate contacts are provided by serine 77, asparagine 129, glutamate 173, asparagine 180, tyrosine 204, tyrosine 256, and valine 274.

Belongs to the glutaminase family. In terms of assembly, homotetramer.

The catalysed reaction is L-glutamine + H2O = L-glutamate + NH4(+). The polypeptide is Glutaminase (Oceanobacillus iheyensis (strain DSM 14371 / CIP 107618 / JCM 11309 / KCTC 3954 / HTE831)).